A 140-amino-acid chain; its full sequence is 3-hydroxyacyl-[acyl-carrier-protein] dehydratase FabZ (140 aa).

Histidine 48 is an active-site residue.

This sequence belongs to the thioester dehydratase family. FabZ subfamily.

The protein localises to the cytoplasm. It carries out the reaction a (3R)-hydroxyacyl-[ACP] = a (2E)-enoyl-[ACP] + H2O. Functionally, involved in unsaturated fatty acids biosynthesis. Catalyzes the dehydration of short chain beta-hydroxyacyl-ACPs and long chain saturated and unsaturated beta-hydroxyacyl-ACPs. This chain is 3-hydroxyacyl-[acyl-carrier-protein] dehydratase FabZ, found in Pelotomaculum thermopropionicum (strain DSM 13744 / JCM 10971 / SI).